A 198-amino-acid chain; its full sequence is tRNA (pseudouridine(54)-N(1))-methyltransferase (198 aa).

Leu128 is an S-adenosyl-L-methionine binding site.

Belongs to the methyltransferase superfamily. TrmY family. In terms of assembly, homodimer.

The protein resides in the cytoplasm. It catalyses the reaction pseudouridine(54) in tRNA + S-adenosyl-L-methionine = N(1)-methylpseudouridine(54) in tRNA + S-adenosyl-L-homocysteine + H(+). Specifically catalyzes the N1-methylation of pseudouridine at position 54 (Psi54) in tRNAs. The chain is tRNA (pseudouridine(54)-N(1))-methyltransferase from Haloferax volcanii (strain ATCC 29605 / DSM 3757 / JCM 8879 / NBRC 14742 / NCIMB 2012 / VKM B-1768 / DS2) (Halobacterium volcanii).